The sequence spans 353 residues: Stearoyl-CoA desaturase 4 (353 aa).

The tract at residues Met-1 to Pro-42 is disordered. Residues Met-1–Val-66 are Cytoplasmic-facing. Polar residues predominate over residues Glu-8–Ile-18. Residues Pro-21–Pro-42 show a composition bias toward basic and acidic residues. A helical membrane pass occupies residues Trp-67–Val-87. Residue Asn-69 participates in substrate binding. Residues Pro-88–Lys-91 lie on the Lumenal side of the membrane. Residues Val-92–Gly-112 form a helical membrane-spanning segment. The Cytoplasmic segment spans residues Ala-113–Tyr-211. Fe cation-binding residues include His-114 and His-119. Residues His-114–His-119 carry the Histidine box-1 motif. Substrate-binding residues include Asn-142, Arg-149, and Asp-150. Positions 151, 154, and 155 each coordinate Fe cation. The short motif at His-151–His-155 is the Histidine box-2 element. Residues Arg-182 and Lys-183 each contribute to the substrate site. Residues Tyr-212 to Leu-231 form a helical membrane-spanning segment. Residues Trp-232–Thr-235 lie on the Lumenal side of the membrane. Residues Phe-236 to Leu-257 traverse the membrane as a helical segment. Residue Trp-256 participates in substrate binding. Topologically, residues Val-258–Ser-353 are cytoplasmic. Residues His-263, His-292, His-295, and His-296 each coordinate Fe cation. Positions His-292–His-296 match the Histidine box-3 motif.

The protein belongs to the fatty acid desaturase type 1 family. Fe(2+) is required as a cofactor. As to expression, detected in heart, but not in brain, liver, skin or adipose tissue.

It localises to the endoplasmic reticulum membrane. Its subcellular location is the microsome membrane. The catalysed reaction is octadecanoyl-CoA + 2 Fe(II)-[cytochrome b5] + O2 + 2 H(+) = (9Z)-octadecenoyl-CoA + 2 Fe(III)-[cytochrome b5] + 2 H2O. The enzyme catalyses hexadecanoyl-CoA + 2 Fe(II)-[cytochrome b5] + O2 + 2 H(+) = (9Z)-hexadecenoyl-CoA + 2 Fe(III)-[cytochrome b5] + 2 H2O. Its function is as follows. Stearoyl-CoA desaturase that utilizes O(2) and electrons from reduced cytochrome b5 to introduce the first double bond into saturated fatty acyl-CoA substrates. Catalyzes the insertion of a cis double bond at the delta-9 position into fatty acyl-CoA substrates including palmitoyl-CoA and stearoyl-CoA. Required for the biosynthesis of membrane phospholipids, cholesterol esters and triglycerides. The sequence is that of Stearoyl-CoA desaturase 4 from Mus musculus (Mouse).